Consider the following 449-residue polypeptide: Glutamyl-tRNA reductase (449 aa).

Substrate is bound by residues Thr-58 to Arg-61, Ser-121, Glu-126 to Gln-128, and Gln-132. The active-site Nucleophile is Cys-59. An NADP(+)-binding site is contributed by Gly-203–Ala-208.

It belongs to the glutamyl-tRNA reductase family. Homodimer.

The enzyme catalyses (S)-4-amino-5-oxopentanoate + tRNA(Glu) + NADP(+) = L-glutamyl-tRNA(Glu) + NADPH + H(+). The protein operates within porphyrin-containing compound metabolism; protoporphyrin-IX biosynthesis; 5-aminolevulinate from L-glutamyl-tRNA(Glu): step 1/2. Catalyzes the NADPH-dependent reduction of glutamyl-tRNA(Glu) to glutamate 1-semialdehyde (GSA). This chain is Glutamyl-tRNA reductase, found in Helicobacter pylori (strain P12).